The primary structure comprises 88 residues: Small ribosomal subunit protein bS20 (88 aa).

The segment at 1–25 (MANSPQAKKRARQNERRAEVNKARR) is disordered. Basic and acidic residues predominate over residues 12-22 (RQNERRAEVNK).

The protein belongs to the bacterial ribosomal protein bS20 family.

Its function is as follows. Binds directly to 16S ribosomal RNA. In Dinoroseobacter shibae (strain DSM 16493 / NCIMB 14021 / DFL 12), this protein is Small ribosomal subunit protein bS20.